The chain runs to 194 residues: uncharacterized protein (194 aa).

The protein to A.rhizogenes plasmid pRia4B ORF-3 in virA region.

This is an uncharacterized protein from Sinorhizobium fredii (strain NBRC 101917 / NGR234).